Consider the following 319-residue polypeptide: Protein-methionine-sulfoxide reductase catalytic subunit MsrP (319 aa).

Residues 1–40 (MHKLNENDVTPEHIFFERRKIIQSMGLMGAASLLPRFSLA) constitute a signal peptide (tat-type signal). Mo-molybdopterin contacts are provided by residues Asn73, 76–77 (YE), Cys131, Thr166, Asn218, Arg223, and 234–236 (NIK).

The protein belongs to the MsrP family. In terms of assembly, heterodimer of a catalytic subunit (MsrP) and a heme-binding subunit (MsrQ). It depends on Mo-molybdopterin as a cofactor. Predicted to be exported by the Tat system. The position of the signal peptide cleavage has not been experimentally proven.

The protein resides in the periplasm. It carries out the reaction L-methionyl-[protein] + a quinone + H2O = L-methionyl-(S)-S-oxide-[protein] + a quinol. The enzyme catalyses L-methionyl-[protein] + a quinone + H2O = L-methionyl-(R)-S-oxide-[protein] + a quinol. Part of the MsrPQ system that repairs oxidized periplasmic proteins containing methionine sulfoxide residues (Met-O), using respiratory chain electrons. Thus protects these proteins from oxidative-stress damage caused by reactive species of oxygen and chlorine generated by the host defense mechanisms. MsrPQ is essential for the maintenance of envelope integrity under bleach stress, rescuing a wide series of structurally unrelated periplasmic proteins from methionine oxidation. The catalytic subunit MsrP is non-stereospecific, being able to reduce both (R-) and (S-) diastereoisomers of methionine sulfoxide. In Pasteurella multocida (strain Pm70), this protein is Protein-methionine-sulfoxide reductase catalytic subunit MsrP.